Reading from the N-terminus, the 329-residue chain is Pantothenate kinase (329 aa).

Residues 1 to 21 (MISPVPSIPRSAHRQRPEATP) form a disordered region. 107–114 (GSVAVGKS) is a binding site for ATP.

The protein belongs to the prokaryotic pantothenate kinase family.

It localises to the cytoplasm. The enzyme catalyses (R)-pantothenate + ATP = (R)-4'-phosphopantothenate + ADP + H(+). It functions in the pathway cofactor biosynthesis; coenzyme A biosynthesis; CoA from (R)-pantothenate: step 1/5. The chain is Pantothenate kinase (coaA) from Streptomyces coelicolor (strain ATCC BAA-471 / A3(2) / M145).